A 274-amino-acid polypeptide reads, in one-letter code: Histone H1.1 (274 aa).

Disordered regions lie at residues 1 to 63 and 129 to 155; these read MSEV…SSHP and PSAS…PATV. An N-acetylserine modification is found at S2. Positions 16–25 are enriched in low complexity; that stretch reads TAADAPVTDA. The span at 40–49 shows a compositional bias: basic and acidic residues; the sequence is NVKEVKEKKT. Positions 61–130 constitute an H15 domain; sequence SHPTYEEMIK…KVKASFKLPS (70 aa). Over residues 129–145 the composition is skewed to low complexity; that stretch reads PSASAKASSPKAAAEKS. K161 participates in a covalent cross-link: Glycyl lysine isopeptide (Lys-Gly) (interchain with G-Cter in ubiquitin). Disordered regions lie at residues 167–233 and 249–274; these read ASKA…PAKK and KTPV…RVKK. Low complexity-rich tracts occupy residues 175 to 185 and 221 to 233; these read AVKPKTAAAKK and AAKT…PAKK.

It belongs to the histone H1/H5 family.

The protein localises to the nucleus. It is found in the chromosome. Its function is as follows. Histones H1 are necessary for the condensation of nucleosome chains into higher-order structures. This is Histone H1.1 from Arabidopsis thaliana (Mouse-ear cress).